The sequence spans 273 residues: Putative pyruvate, phosphate dikinase regulatory protein (273 aa).

An ADP-binding site is contributed by 153-160 (GISRTSKT).

This sequence belongs to the pyruvate, phosphate/water dikinase regulatory protein family. PDRP subfamily.

It carries out the reaction N(tele)-phospho-L-histidyl/L-threonyl-[pyruvate, phosphate dikinase] + ADP = N(tele)-phospho-L-histidyl/O-phospho-L-threonyl-[pyruvate, phosphate dikinase] + AMP + H(+). The catalysed reaction is N(tele)-phospho-L-histidyl/O-phospho-L-threonyl-[pyruvate, phosphate dikinase] + phosphate + H(+) = N(tele)-phospho-L-histidyl/L-threonyl-[pyruvate, phosphate dikinase] + diphosphate. Bifunctional serine/threonine kinase and phosphorylase involved in the regulation of the pyruvate, phosphate dikinase (PPDK) by catalyzing its phosphorylation/dephosphorylation. This Rhizobium etli (strain CIAT 652) protein is Putative pyruvate, phosphate dikinase regulatory protein.